The primary structure comprises 160 residues: 2-amino-4-hydroxy-6-hydroxymethyldihydropteridine pyrophosphokinase (160 aa).

It belongs to the HPPK family. As to quaternary structure, monomer.

The enzyme catalyses 6-hydroxymethyl-7,8-dihydropterin + ATP = (7,8-dihydropterin-6-yl)methyl diphosphate + AMP + H(+). It functions in the pathway cofactor biosynthesis; tetrahydrofolate biosynthesis; 2-amino-4-hydroxy-6-hydroxymethyl-7,8-dihydropteridine diphosphate from 7,8-dihydroneopterin triphosphate: step 4/4. Catalyzes the transfer of pyrophosphate from adenosine triphosphate (ATP) to 6-hydroxymethyl-7,8-dihydropterin, an enzymatic step in folate biosynthesis pathway. The sequence is that of 2-amino-4-hydroxy-6-hydroxymethyldihydropteridine pyrophosphokinase (folK) from Haemophilus influenzae (strain ATCC 51907 / DSM 11121 / KW20 / Rd).